The chain runs to 262 residues: Shikimate dehydrogenase (NADP(+)) (262 aa).

Residues Ser-15 to Ser-17 and Thr-62 contribute to the shikimate site. Lys-66 acts as the Proton acceptor in catalysis. Glu-78 is a binding site for NADP(+). Positions 87 and 102 each coordinate shikimate. NADP(+)-binding positions include Gly-126–Ala-130, Asn-150–Arg-155, and Met-214. Tyr-216 serves as a coordination point for shikimate. Residue Gly-236 participates in NADP(+) binding.

This sequence belongs to the shikimate dehydrogenase family. Homodimer.

It carries out the reaction shikimate + NADP(+) = 3-dehydroshikimate + NADPH + H(+). It participates in metabolic intermediate biosynthesis; chorismate biosynthesis; chorismate from D-erythrose 4-phosphate and phosphoenolpyruvate: step 4/7. Functionally, involved in the biosynthesis of the chorismate, which leads to the biosynthesis of aromatic amino acids. Catalyzes the reversible NADPH linked reduction of 3-dehydroshikimate (DHSA) to yield shikimate (SA). This Acinetobacter baumannii (strain ATCC 17978 / DSM 105126 / CIP 53.77 / LMG 1025 / NCDC KC755 / 5377) protein is Shikimate dehydrogenase (NADP(+)).